Here is a 34-residue protein sequence, read N- to C-terminus: Phalloidin proprotein (34 aa).

A propeptide spanning residues 1 to 10 (MSDINASRLP) is cleaved from the precursor. Positions 11–17 (AWLATCP) form a cross-link, cyclopeptide (Ala-Pro). Residues 12–16 (WLATC) constitute a cross-link (2'-cysteinyl-6'-hydroxytryptophan sulfoxide (Trp-Cys)). The propeptide occupies 18–34 (CVGDDVNPTLSRGESLC).

The protein belongs to the MSDIN fungal toxin family. In terms of processing, processed by the macrocyclase-peptidase enzyme POPB to yield a toxic cyclic heptapeptide. POPB first removes 10 residues from the N-terminus. Conformational trapping of the remaining peptide forces the enzyme to release this intermediate rather than proceed to macrocyclization. The enzyme rebinds the remaining peptide in a different conformation and catalyzes macrocyclization of the N-terminal 7 residues.

In terms of biological role, toxin that belongs to the bicyclic heptapeptides called phallotoxins. Although structurally related to amatoxins, phallotoxins have a different mode of action, which is the stabilization of F-actin. Phallotoxins are poisonous when administered parenterally, but not orally because of poor absorption. This Amanita phalloides (Death cap) protein is Phalloidin proprotein.